Consider the following 444-residue polypeptide: S-locus-specific glycoprotein (444 aa).

The signal sequence occupies residues 1–28 (MRGVIPNYHHSYTLFFFVILVLFPHVFS). A Bulb-type lectin domain is found at 31–159 (TLSPNEALTI…KTNDLDRFMW (129 aa)). N-linked (GlcNAc...) asparagine glycans are attached at residues Asn-43, Asn-125, Asn-243, and Asn-396. The PAN domain occupies 356 to 437 (CGEGDGFLRM…GGQDLYVKVA (82 aa)). Cystine bridges form between Cys-387–Cys-412 and Cys-395–Cys-397.

In terms of tissue distribution, stigma.

Involved in sporophytic self-incompatibility system (the inability of flowering plants to achieve self-fertilization). The chain is S-locus-specific glycoprotein (SLSG) from Brassica oleracea var. alboglabra (Chinese kale).